Consider the following 352-residue polypeptide: Protein RecA (352 aa).

An ATP-binding site is contributed by 67 to 74 (GPESSGKT).

It belongs to the RecA family.

The protein resides in the cytoplasm. Functionally, can catalyze the hydrolysis of ATP in the presence of single-stranded DNA, the ATP-dependent uptake of single-stranded DNA by duplex DNA, and the ATP-dependent hybridization of homologous single-stranded DNAs. It interacts with LexA causing its activation and leading to its autocatalytic cleavage. The chain is Protein RecA from Chlamydia trachomatis serovar L2 (strain ATCC VR-902B / DSM 19102 / 434/Bu).